Here is a 242-residue protein sequence, read N- to C-terminus: Triosephosphate isomerase (242 aa).

8–10 (NWK) serves as a coordination point for substrate. Catalysis depends on His98, which acts as the Electrophile. Glu167 (proton acceptor) is an active-site residue. Residues Gly173, Ser205, and 226–227 (GG) each bind substrate.

The protein belongs to the triosephosphate isomerase family. In terms of assembly, homodimer.

The protein resides in the cytoplasm. It carries out the reaction D-glyceraldehyde 3-phosphate = dihydroxyacetone phosphate. It functions in the pathway carbohydrate biosynthesis; gluconeogenesis. The protein operates within carbohydrate degradation; glycolysis; D-glyceraldehyde 3-phosphate from glycerone phosphate: step 1/1. In terms of biological role, involved in the gluconeogenesis. Catalyzes stereospecifically the conversion of dihydroxyacetone phosphate (DHAP) to D-glyceraldehyde-3-phosphate (G3P). This is Triosephosphate isomerase from Mesomycoplasma hyopneumoniae (strain 7448) (Mycoplasma hyopneumoniae).